Here is a 68-residue protein sequence, read N- to C-terminus: Sec-independent protein translocase protein TatA (68 aa).

The chain crosses the membrane as a helical span at residues 1–21 (MGSLSIWHWLIVLLIVVLVFG). The segment at 42-68 (GMNEGAKDGQPPAKDAGRIIDGEADKK) is disordered. Over residues 56 to 68 (DAGRIIDGEADKK) the composition is skewed to basic and acidic residues.

Belongs to the TatA/E family. The Tat system comprises two distinct complexes: a TatABC complex, containing multiple copies of TatA, TatB and TatC subunits, and a separate TatA complex, containing only TatA subunits. Substrates initially bind to the TatABC complex, which probably triggers association of the separate TatA complex to form the active translocon.

The protein localises to the cell inner membrane. Functionally, part of the twin-arginine translocation (Tat) system that transports large folded proteins containing a characteristic twin-arginine motif in their signal peptide across membranes. TatA could form the protein-conducting channel of the Tat system. This Chromobacterium violaceum (strain ATCC 12472 / DSM 30191 / JCM 1249 / CCUG 213 / NBRC 12614 / NCIMB 9131 / NCTC 9757 / MK) protein is Sec-independent protein translocase protein TatA.